The chain runs to 383 residues: Ribosomal RNA large subunit methyltransferase G (383 aa).

It belongs to the methyltransferase superfamily. RlmG family.

Its subcellular location is the cytoplasm. The catalysed reaction is guanosine(1835) in 23S rRNA + S-adenosyl-L-methionine = N(2)-methylguanosine(1835) in 23S rRNA + S-adenosyl-L-homocysteine + H(+). Specifically methylates the guanine in position 1835 (m2G1835) of 23S rRNA. The protein is Ribosomal RNA large subunit methyltransferase G of Vibrio atlanticus (strain LGP32) (Vibrio splendidus (strain Mel32)).